The chain runs to 353 residues: MPERLITPKGSRDDEAADFSIRPQRLADYVGQPAVREQMEIFIGAARARGEALDHVLIFGPPGLGKTTLSHIIAHELGVNLRHSSGPVLERPGDLAALLTNLEPRDVLFVDEIHRLSPVVEEVLYPAMEDFQLDIVIGEGPAARSIKLDLPPFTLVGATTRAGLLTSPLRDRFGIVQRLEFYNVQDLTRIVQRAAGILGVSIEPAGAAEIARRSRGTPRIANRLLRRVRDYAQIKADGVITDQVADRALDLLDVDVQGFDAQDRRLLLAVIEKFDGGPVGVDSLAAAIGEERGTIEDVVEPYLIQQGFLMRTPRGRMATSNAYRYFGLPAPRMTGVPGDLFGAQEEGGGEGKL.

A large ATPase domain (RuvB-L) region spans residues 1-182 (MPERLITPKG…FGIVQRLEFY (182 aa)). ATP-binding positions include Ile21, Arg22, Gly63, Lys66, Thr67, Thr68, 129–131 (EDF), Arg172, Tyr182, and Arg219. Thr67 is a binding site for Mg(2+). Residues 183-253 (NVQDLTRIVQ…VADRALDLLD (71 aa)) form a small ATPAse domain (RuvB-S) region. The tract at residues 256–353 (VQGFDAQDRR…QEEGGGEGKL (98 aa)) is head domain (RuvB-H). Residues Arg292, Arg311, and Arg316 each coordinate DNA.

The protein belongs to the RuvB family. In terms of assembly, homohexamer. Forms an RuvA(8)-RuvB(12)-Holliday junction (HJ) complex. HJ DNA is sandwiched between 2 RuvA tetramers; dsDNA enters through RuvA and exits via RuvB. An RuvB hexamer assembles on each DNA strand where it exits the tetramer. Each RuvB hexamer is contacted by two RuvA subunits (via domain III) on 2 adjacent RuvB subunits; this complex drives branch migration. In the full resolvosome a probable DNA-RuvA(4)-RuvB(12)-RuvC(2) complex forms which resolves the HJ.

It is found in the cytoplasm. The enzyme catalyses ATP + H2O = ADP + phosphate + H(+). The RuvA-RuvB-RuvC complex processes Holliday junction (HJ) DNA during genetic recombination and DNA repair, while the RuvA-RuvB complex plays an important role in the rescue of blocked DNA replication forks via replication fork reversal (RFR). RuvA specifically binds to HJ cruciform DNA, conferring on it an open structure. The RuvB hexamer acts as an ATP-dependent pump, pulling dsDNA into and through the RuvAB complex. RuvB forms 2 homohexamers on either side of HJ DNA bound by 1 or 2 RuvA tetramers; 4 subunits per hexamer contact DNA at a time. Coordinated motions by a converter formed by DNA-disengaged RuvB subunits stimulates ATP hydrolysis and nucleotide exchange. Immobilization of the converter enables RuvB to convert the ATP-contained energy into a lever motion, pulling 2 nucleotides of DNA out of the RuvA tetramer per ATP hydrolyzed, thus driving DNA branch migration. The RuvB motors rotate together with the DNA substrate, which together with the progressing nucleotide cycle form the mechanistic basis for DNA recombination by continuous HJ branch migration. Branch migration allows RuvC to scan DNA until it finds its consensus sequence, where it cleaves and resolves cruciform DNA. This is Holliday junction branch migration complex subunit RuvB from Thioalkalivibrio sulfidiphilus (strain HL-EbGR7).